The sequence spans 354 residues: MSFINSWLRSDIKMINAYHVPISADMVKMDAMESPFSLSDELTDQYLTYLVDAQLNRYPSPSSDKLNQTLRLLMNIPKEFGVLLGNGSDELIQLLALACNTGDTVLSVEPSFVMYGMITKFTRLNYQSVLLTDDFEIDDDTMQKAIKTYNPKLIFIAYPNNPTGNMFNREIIEHIISSTKAMVVLDEAYYAYTTDSFLTDIAKYPNLVLLRTVSKIGFAGLRLGLLIATQDTVNQLNKLRLPYNINILTQVSANFLLQEKNTINANVSVILAQRQVLFDALVKINVLKVYPSQANFILFKAPNTNILFDFLKENGVLIKNLSVKKKLINCLRVTIGTEEQNQKFINIVEKFYIL.

Residue K215 is modified to N6-(pyridoxal phosphate)lysine.

This sequence belongs to the class-II pyridoxal-phosphate-dependent aminotransferase family. Histidinol-phosphate aminotransferase subfamily. Homodimer. It depends on pyridoxal 5'-phosphate as a cofactor.

The enzyme catalyses L-histidinol phosphate + 2-oxoglutarate = 3-(imidazol-4-yl)-2-oxopropyl phosphate + L-glutamate. It functions in the pathway amino-acid biosynthesis; L-histidine biosynthesis; L-histidine from 5-phospho-alpha-D-ribose 1-diphosphate: step 7/9. The sequence is that of Histidinol-phosphate aminotransferase from Vesicomyosocius okutanii subsp. Calyptogena okutanii (strain HA).